The following is a 394-amino-acid chain: Elongation factor Tu-A (394 aa).

Positions 10–204 (KPHVNVGTIG…HLDTYIPEPQ (195 aa)) constitute a tr-type G domain. The interval 19 to 26 (GHVDHGKT) is G1. Residue 19–26 (GHVDHGKT) participates in GTP binding. A Mg(2+)-binding site is contributed by threonine 26. Residues 60–64 (GITIN) are G2. Residues 81 to 84 (DCPG) are G3. Residues 81-85 (DCPGH) and 136-139 (NKCD) contribute to the GTP site. A G4 region spans residues 136-139 (NKCD). The segment at 174 to 176 (SAL) is G5.

It belongs to the TRAFAC class translation factor GTPase superfamily. Classic translation factor GTPase family. EF-Tu/EF-1A subfamily. As to quaternary structure, monomer.

The protein localises to the cytoplasm. The catalysed reaction is GTP + H2O = GDP + phosphate + H(+). GTP hydrolase that promotes the GTP-dependent binding of aminoacyl-tRNA to the A-site of ribosomes during protein biosynthesis. The chain is Elongation factor Tu-A from Pasteurella multocida (strain Pm70).